The chain runs to 265 residues: Phosphonates import ATP-binding protein PhnC 1 (265 aa).

An ABC transporter domain is found at 3 to 247 (LRLSAIDLRH…HLDTLYANEQ (245 aa)). Residue 36–43 (GPSGAGKT) coordinates ATP.

It belongs to the ABC transporter superfamily. Phosphonates importer (TC 3.A.1.9.1) family. The complex is composed of two ATP-binding proteins (PhnC), two transmembrane proteins (PhnE) and a solute-binding protein (PhnD).

The protein localises to the cell inner membrane. It catalyses the reaction phosphonate(out) + ATP + H2O = phosphonate(in) + ADP + phosphate + H(+). Part of the ABC transporter complex PhnCDE involved in phosphonates import. Responsible for energy coupling to the transport system. The polypeptide is Phosphonates import ATP-binding protein PhnC 1 (Pseudomonas syringae pv. tomato (strain ATCC BAA-871 / DC3000)).